Here is a 380-residue protein sequence, read N- to C-terminus: Aminomethyltransferase (380 aa).

It belongs to the GcvT family. The glycine cleavage system is composed of four proteins: P, T, L and H.

The enzyme catalyses N(6)-[(R)-S(8)-aminomethyldihydrolipoyl]-L-lysyl-[protein] + (6S)-5,6,7,8-tetrahydrofolate = N(6)-[(R)-dihydrolipoyl]-L-lysyl-[protein] + (6R)-5,10-methylene-5,6,7,8-tetrahydrofolate + NH4(+). In terms of biological role, the glycine cleavage system catalyzes the degradation of glycine. This is Aminomethyltransferase from Koribacter versatilis (strain Ellin345).